The sequence spans 61 residues: UPF0181 protein KPN78578_22920 (61 aa).

The protein belongs to the UPF0181 family.

The protein is UPF0181 protein KPN78578_22920 of Klebsiella pneumoniae subsp. pneumoniae (strain ATCC 700721 / MGH 78578).